Consider the following 111-residue polypeptide: Cytochrome c (111 aa).

The residue at position 1 (Ala1) is an N-acetylalanine. Heme c contacts are provided by Cys22, Cys25, and His26. Position 80 is an N6,N6,N6-trimethyllysine (Lys80). Met88 is a binding site for heme c. At Lys94 the chain carries N6,N6,N6-trimethyllysine.

It belongs to the cytochrome c family. Post-translationally, binds 1 heme c group covalently per subunit.

The protein resides in the mitochondrion intermembrane space. In terms of biological role, electron carrier protein. The oxidized form of the cytochrome c heme group can accept an electron from the heme group of the cytochrome c1 subunit of cytochrome reductase. Cytochrome c then transfers this electron to the cytochrome oxidase complex, the final protein carrier in the mitochondrial electron-transport chain. This Nigella damascena (Love-in-a-mist) protein is Cytochrome c.